We begin with the raw amino-acid sequence, 122 residues long: Protein 7a (122 aa).

The N-terminal stretch at methionine 1–cysteine 15 is a signal peptide. Residues glutamate 16 to serine 81 enclose the X4e domain. Residues glutamate 16–glutamate 96 are Virion surface-facing. Intrachain disulfides connect cysteine 23/cysteine 58 and cysteine 35/cysteine 67. The chain crosses the membrane as a helical span at residues leucine 97–isoleucine 117. Residues lysine 118–glutamate 122 are Intravirion-facing. A Di-lysine motif motif is present at residues lysine 118 to glutamate 122.

In terms of assembly, interacts with the spike glycoprotein, M protein, E protein and the accessory protein 3.

The protein localises to the virion. It localises to the host endoplasmic reticulum membrane. It is found in the host endoplasmic reticulum-Golgi intermediate compartment membrane. Its subcellular location is the host Golgi apparatus membrane. Its function is as follows. Non-structural protein which is dispensable for virus replication in cell culture. The polypeptide is Protein 7a (Bat coronavirus Rp3/2004 (BtCoV/Rp3/2004)).